The primary structure comprises 273 residues: NAD-dependent protein deacylase (273 aa).

The Deacetylase sirtuin-type domain occupies R20–G272. An NAD(+)-binding site is contributed by G48–W67. Residues Y92 and R95 each coordinate substrate. Q129–D132 provides a ligand contact to NAD(+). Catalysis depends on H147, which acts as the Proton acceptor. 2 residues coordinate Zn(2+): C155 and C174. NAD(+)-binding positions include G214–S216, N240–E242, and A258.

Belongs to the sirtuin family. Class III subfamily. The cofactor is Zn(2+).

The protein localises to the cytoplasm. The catalysed reaction is N(6)-acetyl-L-lysyl-[protein] + NAD(+) + H2O = 2''-O-acetyl-ADP-D-ribose + nicotinamide + L-lysyl-[protein]. It catalyses the reaction N(6)-succinyl-L-lysyl-[protein] + NAD(+) + H2O = 2''-O-succinyl-ADP-D-ribose + nicotinamide + L-lysyl-[protein]. The enzyme catalyses N(6)-(2-hydroxyisobutanoyl)-L-lysyl-[protein] + NAD(+) + H2O = 2''-O-(2-hydroxyisobutanoyl)-ADP-D-ribose + nicotinamide + L-lysyl-[protein]. In terms of biological role, NAD-dependent lysine deacetylase that specifically removes acetyl groups on target proteins. Also acts as a protein-lysine deacylase by mediating protein desuccinylation and de-2-hydroxyisobutyrylation. Modulates the activities of several proteins which are inactive in their acylated form. The polypeptide is NAD-dependent protein deacylase (Escherichia coli O6:H1 (strain CFT073 / ATCC 700928 / UPEC)).